The sequence spans 102 residues: Small ribosomal subunit protein uS10 (102 aa).

The protein belongs to the universal ribosomal protein uS10 family. Part of the 30S ribosomal subunit.

Functionally, involved in the binding of tRNA to the ribosomes. The polypeptide is Small ribosomal subunit protein uS10 (Bifidobacterium animalis subsp. lactis (strain AD011)).